A 596-amino-acid chain; its full sequence is V-type ATP synthase alpha chain (596 aa).

An ATP-binding site is contributed by 233–240 (GPFGAGKT).

This sequence belongs to the ATPase alpha/beta chains family.

The catalysed reaction is ATP + H2O + 4 H(+)(in) = ADP + phosphate + 5 H(+)(out). In terms of biological role, produces ATP from ADP in the presence of a proton gradient across the membrane. The V-type alpha chain is a catalytic subunit. The polypeptide is V-type ATP synthase alpha chain (Streptococcus gordonii (strain Challis / ATCC 35105 / BCRC 15272 / CH1 / DL1 / V288)).